A 462-amino-acid chain; its full sequence is tRNA-2-methylthio-N(6)-dimethylallyladenosine synthase (462 aa).

The MTTase N-terminal domain maps to 18–138 (RKVFVKTYGC…LPNALARVRS (121 aa)). Cys-27, Cys-63, Cys-101, Cys-179, Cys-183, and Cys-186 together coordinate [4Fe-4S] cluster. The Radical SAM core domain maps to 165–397 (RKRGVSAFLT…QALLSEQQYA (233 aa)). In terms of domain architecture, TRAM spans 400–462 (DSMIGREMDV…TNSLIAQKLA (63 aa)).

It belongs to the methylthiotransferase family. MiaB subfamily. As to quaternary structure, monomer. Requires [4Fe-4S] cluster as cofactor.

Its subcellular location is the cytoplasm. It carries out the reaction N(6)-dimethylallyladenosine(37) in tRNA + (sulfur carrier)-SH + AH2 + 2 S-adenosyl-L-methionine = 2-methylsulfanyl-N(6)-dimethylallyladenosine(37) in tRNA + (sulfur carrier)-H + 5'-deoxyadenosine + L-methionine + A + S-adenosyl-L-homocysteine + 2 H(+). Catalyzes the methylthiolation of N6-(dimethylallyl)adenosine (i(6)A), leading to the formation of 2-methylthio-N6-(dimethylallyl)adenosine (ms(2)i(6)A) at position 37 in tRNAs that read codons beginning with uridine. The polypeptide is tRNA-2-methylthio-N(6)-dimethylallyladenosine synthase (Brucella anthropi (strain ATCC 49188 / DSM 6882 / CCUG 24695 / JCM 21032 / LMG 3331 / NBRC 15819 / NCTC 12168 / Alc 37) (Ochrobactrum anthropi)).